Consider the following 284-residue polypeptide: Acetylglutamate kinase (284 aa).

Substrate contacts are provided by residues 64–65 (GG), R86, and N181.

It belongs to the acetylglutamate kinase family. ArgB subfamily.

It localises to the cytoplasm. It catalyses the reaction N-acetyl-L-glutamate + ATP = N-acetyl-L-glutamyl 5-phosphate + ADP. It participates in amino-acid biosynthesis; L-arginine biosynthesis; N(2)-acetyl-L-ornithine from L-glutamate: step 2/4. In terms of biological role, catalyzes the ATP-dependent phosphorylation of N-acetyl-L-glutamate. This chain is Acetylglutamate kinase, found in Nitratiruptor sp. (strain SB155-2).